The chain runs to 348 residues: Inositol 2-dehydrogenase/D-chiro-inositol 3-dehydrogenase (348 aa).

Belongs to the Gfo/Idh/MocA family. Homotetramer.

The catalysed reaction is myo-inositol + NAD(+) = scyllo-inosose + NADH + H(+). It carries out the reaction 1D-chiro-inositol + NAD(+) = scyllo-inosine + NADH + H(+). Its pathway is polyol metabolism; myo-inositol degradation into acetyl-CoA; acetyl-CoA from myo-inositol: step 1/7. Its function is as follows. Involved in the oxidation of myo-inositol (MI) and D-chiro-inositol (DCI) to 2-keto-myo-inositol (2KMI or 2-inosose) and 1-keto-D-chiro-inositol (1KDCI), respectively. The chain is Inositol 2-dehydrogenase/D-chiro-inositol 3-dehydrogenase from Halalkalibacterium halodurans (strain ATCC BAA-125 / DSM 18197 / FERM 7344 / JCM 9153 / C-125) (Bacillus halodurans).